A 122-amino-acid chain; its full sequence is Pupal cuticle protein Edg-78E (122 aa).

The signal sequence occupies residues 1–16 (MYKYLFCLALIGCACA). The 61-residue stretch at 36 to 96 (EGNYQYAYET…PVGDHLPTPP (61 aa)) folds into the Chitin-binding type R&amp;R domain.

In terms of tissue distribution, imaginal (anterior) epidermis.

Functionally, component of the cuticle of the pupa of fruit fly. In Drosophila melanogaster (Fruit fly), this protein is Pupal cuticle protein Edg-78E (Edg78E).